Reading from the N-terminus, the 100-residue chain is uncharacterized protein (100 aa).

3 helical membrane-spanning segments follow: residues 7–28 (TLIG…LLSL), 38–60 (AQLS…ILII), and 65–87 (LSAL…ANGV).

It localises to the cell membrane. This is an uncharacterized protein from Archaeoglobus fulgidus (strain ATCC 49558 / DSM 4304 / JCM 9628 / NBRC 100126 / VC-16).